We begin with the raw amino-acid sequence, 328 residues long: RNA-binding motif protein, X-linked 2 (328 aa).

Residue Lys8 forms a Glycyl lysine isopeptide (Lys-Gly) (interchain with G-Cter in SUMO2) linkage. The 79-residue stretch at 36 to 114 (AWIFLGGLPY…RTIRVDHVAN (79 aa)) folds into the RRM domain. The disordered stretch occupies residues 118–328 (PQESEDVDDV…SFHASDRRHY (211 aa)). At Thr140 the chain carries Phosphothreonine. Residue Ser149 is modified to Phosphoserine. Over residues 157–172 (TKKPKKDKKEKKKKKE) the composition is skewed to basic residues. Composition is skewed to basic and acidic residues over residues 192 to 219 (TVKE…ECRE), 236 to 247 (GRAEEPEWEAKK), and 255 to 273 (KPSS…DRGR). Lys246 participates in a covalent cross-link: Glycyl lysine isopeptide (Lys-Gly) (interchain with G-Cter in SUMO2). Residue Ser274 is modified to Phosphoserine. Over residues 291–314 (HRSRSRSRSRSPDRSHRHKKHRYS) the composition is skewed to basic residues. Residues 315–328 (HERESFHASDRRHY) show a composition bias toward basic and acidic residues.

This sequence belongs to the IST3 family. In terms of assembly, part of the activated spliceosome B/catalytic step 1 spliceosome, one of the forms of the spliceosome which has a well-formed active site but still cannot catalyze the branching reaction and is composed of at least 52 proteins, the U2, U5 and U6 snRNAs and the pre-mRNA. Component of the minor spliceosome, which splices U12-type introns.

Its subcellular location is the nucleus. Involved in pre-mRNA splicing as component of the activated spliceosome. As a component of the minor spliceosome, involved in the splicing of U12-type introns in pre-mRNAs. This Rattus norvegicus (Rat) protein is RNA-binding motif protein, X-linked 2 (Rbmx2).